We begin with the raw amino-acid sequence, 1450 residues long: Protein TIC 214 (1450 aa).

6 consecutive transmembrane segments (helical) span residues phenylalanine 29 to isoleucine 49, valine 61 to threonine 81, leucine 86 to glutamine 106, phenylalanine 132 to phenylalanine 152, leucine 166 to alanine 186, and isoleucine 213 to phenylalanine 233.

Belongs to the TIC214 family. Part of the Tic complex.

The protein resides in the plastid. Its subcellular location is the chloroplast inner membrane. In terms of biological role, involved in protein precursor import into chloroplasts. May be part of an intermediate translocation complex acting as a protein-conducting channel at the inner envelope. The protein is Protein TIC 214 of Chaetosphaeridium globosum (Charophycean green alga).